The chain runs to 905 residues: Coatomer subunit beta' (905 aa).

8 WD repeats span residues A13–T52, V55–M94, A97–Q136, G140–T180, G183–T224, G227–T266, S350–F388, and S390–K425. K627 carries the post-translational modification N6-acetyllysine. The stretch at I746 to K783 is one WD 9 repeat. Residues E837 to D905 form a disordered region. At S859 the chain carries Phosphoserine. Residues Q867–I891 adopt a coiled-coil conformation. A compositionally biased stretch (acidic residues) spans E878–D905.

It belongs to the WD repeat COPB2 family. Oligomeric complex that consists of at least the alpha, beta, beta', gamma, delta, epsilon and zeta subunits. Probably interacts with PEX11A. Interacts with JAGN1. Interacts with SCYL1.

It is found in the cytoplasm. The protein localises to the cytosol. The protein resides in the golgi apparatus membrane. Its subcellular location is the cytoplasmic vesicle. It localises to the COPI-coated vesicle membrane. Functionally, the coatomer is a cytosolic protein complex that binds to dilysine motifs and reversibly associates with Golgi non-clathrin-coated vesicles, which further mediate biosynthetic protein transport from the ER, via the Golgi up to the trans Golgi network. Coatomer complex is required for budding from Golgi membranes, and is essential for the retrograde Golgi-to-ER transport of dilysine-tagged proteins. In mammals, the coatomer can only be recruited by membranes associated to ADP-ribosylation factors (ARFs), which are small GTP-binding proteins; the complex also influences the Golgi structural integrity, as well as the processing, activity, and endocytic recycling of LDL receptors. This coatomer complex protein, essential for Golgi budding and vesicular trafficking, is a selective binding protein (RACK) for protein kinase C, epsilon type. It binds to Golgi membranes in a GTP-dependent manner. This Rattus norvegicus (Rat) protein is Coatomer subunit beta' (Copb2).